Reading from the N-terminus, the 758-residue chain is Probable ubiquitin carboxyl-terminal hydrolase creB (758 aa).

Residues Met1–Glu27 form a disordered region. The USP domain occupies Phe57–Thr468. The active-site Nucleophile is Cys66. 2 disordered regions span residues Ala116–Glu148 and Gln243–Pro268. The segment covering Thr253 to Pro268 has biased composition (polar residues). The active-site Proton acceptor is the His419. The segment at Ile514–Trp744 is disordered. The segment covering Ala554–Pro563 has biased composition (pro residues). A coiled-coil region spans residues Lys573–Lys631. 2 stretches are compositionally biased toward basic and acidic residues: residues Lys573 to Arg650 and Asp729 to Gly740.

This sequence belongs to the peptidase C19 family. In terms of assembly, interacts with creA, creC and qutD.

It carries out the reaction Thiol-dependent hydrolysis of ester, thioester, amide, peptide and isopeptide bonds formed by the C-terminal Gly of ubiquitin (a 76-residue protein attached to proteins as an intracellular targeting signal).. Functionally, ubiquitin thioesterase component of the regulatory network controlling carbon source utilization through ubiquitination and deubiquitination involving creA, creB, creC, creD and acrB. Deubiquitinates the creA catabolic repressor and the quinate permease qutD. Also plays a role in response to carbon starvation and the control of extracellular proteases activity. In Aspergillus niger (strain ATCC MYA-4892 / CBS 513.88 / FGSC A1513), this protein is Probable ubiquitin carboxyl-terminal hydrolase creB (creB).